Here is a 360-residue protein sequence, read N- to C-terminus: Nucleoporin SEH1 (360 aa).

WD repeat units lie at residues 10–49 (DHKD…DWHC), 55–96 (THSG…SNDK), 111–152 (DSRT…NLSQ), 160–210 (SCKL…RKYA), 217–258 (SVSD…KELS), and 276–315 (NHNS…NWKC).

The protein belongs to the WD repeat SEC13 family. As to quaternary structure, component of the Nup107-160 subcomplex of the nuclear pore complex (NPC). The Nup107-160 subcomplex includes NUP160, NUP133, NUP107, NUP98, NUP85, NUP43, NUP37, SEH1 and SEC13. Component of the GATOR2 subcomplex, composed of MIOS, SEC13, SEH1L, WDR24 and WDR59. The GATOR2 complex interacts with CASTOR1 and CASTOR2; the interaction is negatively regulated by arginine. The GATOR2 complex interacts with SESN1, SESN2 and SESN3; the interaction is negatively regulated by amino acids.

It localises to the chromosome. It is found in the centromere. The protein localises to the kinetochore. Its subcellular location is the nucleus. The protein resides in the nuclear pore complex. It localises to the lysosome membrane. The GATOR2 complex is negatively regulated by the upstream amino acid sensors CASTOR1 and SESN2, which sequester the GATOR2 complex in absence of amino acids. In the presence of abundant amino acids, GATOR2 is released from CASTOR1 and SESN2 and activated. Its function is as follows. Component of the Nup107-160 subcomplex of the nuclear pore complex (NPC). The Nup107-160 subcomplex is required for the assembly of a functional NPC. The Nup107-160 subcomplex is also required for normal kinetochore microtubule attachment, mitotic progression and chromosome segregation. This subunit plays a role in recruitment of the Nup107-160 subcomplex to the kinetochore. In terms of biological role, as a component of the GATOR2 complex, functions as an activator of the amino acid-sensing branch of the mTORC1 signaling pathway. The GATOR2 complex indirectly activates mTORC1 through the inhibition of the GATOR1 subcomplex. GATOR2 probably acts as an E3 ubiquitin-protein ligase toward GATOR1. In the presence of abundant amino acids, the GATOR2 complex mediates ubiquitination of the NPRL2 core component of the GATOR1 complex, leading to GATOR1 inactivation. In the absence of amino acids, GATOR2 is inhibited, activating the GATOR1 complex. The chain is Nucleoporin SEH1 (seh1l) from Xenopus tropicalis (Western clawed frog).